The sequence spans 217 residues: Homologous-pairing protein 2 homolog (217 aa).

The stretch at 93 to 153 forms a coiled coil; the sequence is IVALTAKVQS…LKNIKAATNH (61 aa). Residues 118 to 182 form a DNA-binding region; the sequence is SSALTTPEMQ…WRKRKRMATE (65 aa).

It belongs to the HOP2 family. In terms of assembly, interacts with the DNA-binding domain of the nuclear receptors NR3C1/GR, ESR2/ER-beta, THRB and RXRA. Forms a stable heterodimer with MND1. Interacts with PSMC3/TBP1. In terms of processing, PTM: Phosphorylated by PKA, PKC and MAPK. As to expression, highly expressed in testis and colon.

It localises to the nucleus. In terms of biological role, plays an important role in meiotic recombination. Stimulates DMC1-mediated strand exchange required for pairing homologous chromosomes during meiosis. The complex PSMC3IP/MND1 binds DNA, stimulates the recombinase activity of DMC1 as well as DMC1 D-loop formation from double-strand DNA. This complex stabilizes presynaptic RAD51 and DMC1 filaments formed on single strand DNA to capture double-strand DNA. This complex stimulates both synaptic and presynaptic critical steps in RAD51 and DMC1-promoted homologous pairing. May inhibit HIV-1 viral protein TAT activity and modulate the activity of proteasomes through association with PSMC3. Acts as a tissue specific coactivator of hormone-dependent transcription mediated by nuclear receptors. The protein is Homologous-pairing protein 2 homolog (PSMC3IP) of Homo sapiens (Human).